The primary structure comprises 287 residues: Aspartate dehydrogenase domain-containing protein (287 aa).

Serine 24 and serine 172 each carry phosphoserine.

It belongs to the L-aspartate dehydrogenase family.

This chain is Aspartate dehydrogenase domain-containing protein, found in Mus musculus (Mouse).